The sequence spans 438 residues: Phosphoribosylamine--glycine ligase (438 aa).

The ATP-grasp domain maps to 108 to 316 (RTFMERNEIP…LLEVAEGIVD (209 aa)). 135–194 (VDDFGRPVVVKPIGLTGGKGVKVVGYQLRDNEEAKSYAEELIRRDGRVLIEERTNGVEFT) serves as a coordination point for ATP. 3 residues coordinate Mg(2+): Q274, E286, and N288. Q274, E286, and N288 together coordinate Mn(2+).

It belongs to the GARS family. The cofactor is Mg(2+). Mn(2+) is required as a cofactor.

The enzyme catalyses 5-phospho-beta-D-ribosylamine + glycine + ATP = N(1)-(5-phospho-beta-D-ribosyl)glycinamide + ADP + phosphate + H(+). It participates in purine metabolism; IMP biosynthesis via de novo pathway; N(1)-(5-phospho-D-ribosyl)glycinamide from 5-phospho-alpha-D-ribose 1-diphosphate: step 2/2. This chain is Phosphoribosylamine--glycine ligase, found in Thermococcus gammatolerans (strain DSM 15229 / JCM 11827 / EJ3).